Here is a 324-residue protein sequence, read N- to C-terminus: Methionyl-tRNA formyltransferase (324 aa).

114-117 (SLLP) lines the (6S)-5,6,7,8-tetrahydrofolate pocket.

Belongs to the Fmt family.

It catalyses the reaction L-methionyl-tRNA(fMet) + (6R)-10-formyltetrahydrofolate = N-formyl-L-methionyl-tRNA(fMet) + (6S)-5,6,7,8-tetrahydrofolate + H(+). Functionally, attaches a formyl group to the free amino group of methionyl-tRNA(fMet). The formyl group appears to play a dual role in the initiator identity of N-formylmethionyl-tRNA by promoting its recognition by IF2 and preventing the misappropriation of this tRNA by the elongation apparatus. This is Methionyl-tRNA formyltransferase from Azobacteroides pseudotrichonymphae genomovar. CFP2.